The primary structure comprises 125 residues: MPTLNQLIRHGREEKRRTDRTRALDKCPQKLGACPRVSTRTPKKPNSAPRKIAKVRLSNRHDIFAHIPGEGHNSQEHSQVLIRGGRVKDSPGVKSHCIRGVKDLMGIPGRRSGRSKYGAEKPKSI.

Disordered stretches follow at residues Met-1–Ala-23 and Leu-104–Ile-125. Positions His-10–Ala-23 are enriched in basic and acidic residues.

This sequence belongs to the universal ribosomal protein uS12 family.

It localises to the mitochondrion. In terms of biological role, protein S12 is involved in the translation initiation step. The chain is Small ribosomal subunit protein uS12m (RPS12) from Raphanus sativus (Radish).